A 360-amino-acid polypeptide reads, in one-letter code: Endolytic murein transglycosylase (360 aa).

A helical transmembrane segment spans residues 16–36; it reads IILSSIVVLFLIIGGAFLYGK.

The protein belongs to the transglycosylase MltG family.

It localises to the cell membrane. The enzyme catalyses a peptidoglycan chain = a peptidoglycan chain with N-acetyl-1,6-anhydromuramyl-[peptide] at the reducing end + a peptidoglycan chain with N-acetylglucosamine at the non-reducing end.. Its function is as follows. Functions as a peptidoglycan terminase that cleaves nascent peptidoglycan strands endolytically to terminate their elongation. This is Endolytic murein transglycosylase from Bacillus subtilis (strain 168).